The primary structure comprises 300 residues: Putative S-adenosyl-L-methionine-dependent methyltransferase MUL_0817 (300 aa).

S-adenosyl-L-methionine is bound by residues Asp127 and Asp156 to Leu157.

Belongs to the UPF0677 family.

Functionally, exhibits S-adenosyl-L-methionine-dependent methyltransferase activity. The chain is Putative S-adenosyl-L-methionine-dependent methyltransferase MUL_0817 from Mycobacterium ulcerans (strain Agy99).